The sequence spans 325 residues: NADH-ubiquinone oxidoreductase chain 1 (325 aa).

A run of 8 helical transmembrane segments spans residues 5 to 25 (VPAE…FLVL), 79 to 99 (VATF…YGMV), 105 to 125 (IGLL…IIAG), 144 to 164 (MVPY…CVGS), 177 to 197 (IWSG…RLAE), 237 to 257 (ILMS…ILDL), 263 to 283 (IPGS…YIWV), and 302 to 322 (VFLP…VTFQ).

Belongs to the complex I subunit 1 family.

The protein resides in the mitochondrion inner membrane. The catalysed reaction is a ubiquinone + NADH + 5 H(+)(in) = a ubiquinol + NAD(+) + 4 H(+)(out). Core subunit of the mitochondrial membrane respiratory chain NADH dehydrogenase (Complex I) that is believed to belong to the minimal assembly required for catalysis. Complex I functions in the transfer of electrons from NADH to the respiratory chain. The immediate electron acceptor for the enzyme is believed to be ubiquinone. This is NADH-ubiquinone oxidoreductase chain 1 (ND1) from Petunia hybrida (Petunia).